A 402-amino-acid chain; its full sequence is Mitochondrial inner membrane protein OXA1 (402 aa).

The transit peptide at 1–42 (MFKLTSRLVTSRFAASSRLATARTIVLPRPHPSWISFQAKRF) directs the protein to the mitochondrion. At 43 to 118 (NSTGPNANDV…PSDIIQHVLE (76 aa)) the chain is on the mitochondrial intermembrane side. Residues 119 to 139 (AVHVYSGLPWWGTIAATTILI) traverse the membrane as a helical segment. Residues 140 to 199 (RCLMFPLYVKSSDTVARNSHIKPELDALNNKLMSTTDLQQGQLVAMQRKKLLSSHGIKNR) are Mitochondrial matrix-facing. Residues 200–220 (WLAAPMLQIPIALGFFNALRH) traverse the membrane as a helical segment. Residues 221 to 239 (MANYPVDGFANQGVAWFTD) are Mitochondrial intermembrane-facing. The helical transmembrane segment at 240–260 (LTQADPYLGLQVITAAVFISF) threads the bilayer. Residues 261–275 (TRLGGETGAQQFSSP) lie on the Mitochondrial matrix side of the membrane. A helical transmembrane segment spans residues 276-292 (MKRLFTILPIISIPATM). Over 293–297 (NLSSA) the chain is Mitochondrial intermembrane. The helical transmembrane segment at 298 to 316 (VVLYFAFNGAFSVLQTMIL) threads the bilayer. The Mitochondrial matrix segment spans residues 317–402 (RNKWVRSKLK…HKSNFINNKK (86 aa)). Over residues 366 to 385 (RQLMQDNEKKLQESFKEKRQ) the composition is skewed to basic and acidic residues. Positions 366–386 (RQLMQDNEKKLQESFKEKRQN) are disordered.

Belongs to the OXA1/ALB3/YidC family. In terms of assembly, interacts with the large ribosome subunit of mitochondrial ribosome. Interacts directly with MRP20. Interacts with OXA1.

It localises to the mitochondrion inner membrane. Mitochondrial inner membrane insertase that mediates the insertion of both mitochondrion-encoded precursors and nuclear-encoded proteins from the matrix into the inner membrane. Links mitoribosomes with the inner membrane. Forms pores capable of accommodating translocating protein segments. Essential for the activity and assembly of cytochrome c oxidase. Plays a central role in the translocation and export of the N-terminal part of the COX2 protein into the mitochondrial intermembrane space. The polypeptide is Mitochondrial inner membrane protein OXA1 (Saccharomyces cerevisiae (strain ATCC 204508 / S288c) (Baker's yeast)).